The following is a 279-amino-acid chain: Shikimate dehydrogenase (NADP(+)) (279 aa).

Shikimate contacts are provided by residues 18 to 20 (SRS) and Thr64. Lys68 acts as the Proton acceptor in catalysis. Glu80 serves as a coordination point for NADP(+). Shikimate-binding residues include Asn89 and Asp104. NADP(+) is bound by residues 129–133 (GAGGA), 153–158 (NRTVSR), and Ile218. Tyr220 contributes to the shikimate binding site. Gly241 contributes to the NADP(+) binding site.

This sequence belongs to the shikimate dehydrogenase family. Homodimer.

It carries out the reaction shikimate + NADP(+) = 3-dehydroshikimate + NADPH + H(+). The protein operates within metabolic intermediate biosynthesis; chorismate biosynthesis; chorismate from D-erythrose 4-phosphate and phosphoenolpyruvate: step 4/7. Functionally, involved in the biosynthesis of the chorismate, which leads to the biosynthesis of aromatic amino acids. Catalyzes the reversible NADPH linked reduction of 3-dehydroshikimate (DHSA) to yield shikimate (SA). The sequence is that of Shikimate dehydrogenase (NADP(+)) from Chelativorans sp. (strain BNC1).